The sequence spans 412 residues: Serine hydroxymethyltransferase (412 aa).

(6S)-5,6,7,8-tetrahydrofolate contacts are provided by residues leucine 117 and 121–123 (GHL). N6-(pyridoxal phosphate)lysine is present on lysine 226.

The protein belongs to the SHMT family. In terms of assembly, homodimer. Requires pyridoxal 5'-phosphate as cofactor.

It is found in the cytoplasm. It catalyses the reaction (6R)-5,10-methylene-5,6,7,8-tetrahydrofolate + glycine + H2O = (6S)-5,6,7,8-tetrahydrofolate + L-serine. It functions in the pathway one-carbon metabolism; tetrahydrofolate interconversion. It participates in amino-acid biosynthesis; glycine biosynthesis; glycine from L-serine: step 1/1. Its function is as follows. Catalyzes the reversible interconversion of serine and glycine with tetrahydrofolate (THF) serving as the one-carbon carrier. This reaction serves as the major source of one-carbon groups required for the biosynthesis of purines, thymidylate, methionine, and other important biomolecules. Also exhibits THF-independent aldolase activity toward beta-hydroxyamino acids, producing glycine and aldehydes, via a retro-aldol mechanism. This chain is Serine hydroxymethyltransferase, found in Staphylococcus aureus (strain bovine RF122 / ET3-1).